The sequence spans 612 residues: Threonine--tRNA ligase (612 aa).

The interval 218–509 is catalytic; it reads DHRKLGVELG…LSEHFWGNFP (292 aa). Zn(2+) contacts are provided by Cys310, His361, and His486.

Belongs to the class-II aminoacyl-tRNA synthetase family. In terms of assembly, homodimer. Zn(2+) is required as a cofactor.

The protein resides in the cytoplasm. The catalysed reaction is tRNA(Thr) + L-threonine + ATP = L-threonyl-tRNA(Thr) + AMP + diphosphate + H(+). Functionally, catalyzes the attachment of threonine to tRNA(Thr) in a two-step reaction: L-threonine is first activated by ATP to form Thr-AMP and then transferred to the acceptor end of tRNA(Thr). Also edits incorrectly charged L-seryl-tRNA(Thr). The protein is Threonine--tRNA ligase of Helicobacter acinonychis (strain Sheeba).